A 463-amino-acid chain; its full sequence is Nicotinate phosphoribosyltransferase pncB2 (463 aa).

Histidine 202 carries the post-translational modification Phosphohistidine.

This sequence belongs to the NAPRTase family. In terms of processing, transiently phosphorylated on a His residue during the reaction cycle. Phosphorylation strongly increases the affinity for substrates and increases the rate of nicotinate D-ribonucleotide production. Dephosphorylation regenerates the low-affinity form of the enzyme, leading to product release.

The enzyme catalyses nicotinate + 5-phospho-alpha-D-ribose 1-diphosphate + ATP + H2O = nicotinate beta-D-ribonucleotide + ADP + phosphate + diphosphate. Its pathway is cofactor biosynthesis; NAD(+) biosynthesis; nicotinate D-ribonucleotide from nicotinate: step 1/1. Involved in the Preiss-Handler pathway, which is a recycling route that permits the salvage of free nicotinamide (NM) and nicotinic acid (Na) involved in the NAD biosynthesis. Catalyzes the synthesis of beta-nicotinate D-ribonucleotide from nicotinate and 5-phospho-D-ribose 1-phosphate at the expense of ATP. It is not able to use nicotinamide. PncB2 appears to be responsible for the increased salvage synthesis of NAD during infection of host tissues. In Mycobacterium tuberculosis (strain CDC 1551 / Oshkosh), this protein is Nicotinate phosphoribosyltransferase pncB2 (pncB2).